A 314-amino-acid chain; its full sequence is Large ribosomal subunit protein uL10 (314 aa).

Positions 281-314 (GSTQETPEEKKEEAKKEEKSPDESISEGLGALFQ) are disordered. The span at 287-302 (PEEKKEEAKKEEKSPD) shows a compositional bias: basic and acidic residues.

It belongs to the universal ribosomal protein uL10 family. Part of the 50S ribosomal subunit. Forms part of the ribosomal stalk which helps the ribosome interact with GTP-bound translation factors. Forms a heptameric L10(L12)2(L12)2(L12)2 complex, where L10 forms an elongated spine to which the L12 dimers bind in a sequential fashion.

In terms of biological role, forms part of the ribosomal stalk, playing a central role in the interaction of the ribosome with GTP-bound translation factors. The chain is Large ribosomal subunit protein uL10 from Thermoplasma acidophilum (strain ATCC 25905 / DSM 1728 / JCM 9062 / NBRC 15155 / AMRC-C165).